A 627-amino-acid chain; its full sequence is MGCRKSSCPRHHTPKAGTFPPRWFPSAEEPGKKGGQPARPTVVISAGTSEHETITIARRRRTPQLKARHLLSAPANASDLSSSKLIFDVCRSPSDLLLRVPTTNSEHQQAELCATALRPTRSKRLMTENGTAQTGTVPVEQPRNGTMENAKLNMAEGDSSRMESGSKNTASPPVKADNNAAGTHSSPKKRRKVNHACVYCRRSHMTCDSERPCTRCIKRNIGHLCHDEPREPSKRARSEHEHSTAEEDGHSNNEFSNAQSMPRNVDVQDAAGQQILPDGTVALPPSSVSAVQHNTIPSSSAQNSLGHNSQQLLGYNEWLGGQSQFQDMHTFHPSYMFNAPEVTNEYNLLGDFLSSSLLDDGGMFSNDNLQGIYSDPTLINSMANLDNTALLQQAQPSQPTQSQPHQNDSVQGPSSTVVNDKARETYYMTAADPSGSDPPEERMNKLLKAKYDAGLLKPFNYVKGYARLNQYMEKNMKQSSRQKILRQLDKFRPKFRERMQSLTDIELILVEMWFERSLMEYDRVFASMAIPACCWRRTGEIFRGNKEMAELIGVPIESLRDGKLAIHEIIVEDQLVSYWEKFGAIAFDNTQKAMLTSCTLKNPNSSNPGNGIPCCFSFTIRRDNHNM.

Disordered regions lie at residues 1-40 (MGCRKSSCPRHHTPKAGTFPPRWFPSAEEPGKKGGQPARP), 129-148 (NGTAQTGTVPVEQPRNGTME), 155-193 (AEGDSSRMESGSKNTASPPVKADNNAAGTHSSPKKRRKV), 225-258 (CHDEPREPSKRARSEHEHSTAEEDGHSNNEFSNA), 277-305 (PDGTVALPPSSVSAVQHNTIPSSSAQNSL), and 394-416 (AQPSQPTQSQPHQNDSVQGPSST). Over residues 162–171 (MESGSKNTAS) the composition is skewed to polar residues. Residues 197–225 (CVYCRRSHMTCDSERPCTRCIKRNIGHLC) constitute a DNA-binding region (zn(2)-C6 fungal-type). Residues 225–251 (CHDEPREPSKRARSEHEHSTAEEDGHS) are compositionally biased toward basic and acidic residues. Over residues 286-305 (SSVSAVQHNTIPSSSAQNSL) the composition is skewed to polar residues. The segment covering 394-403 (AQPSQPTQSQ) has biased composition (low complexity). Polar residues predominate over residues 404–416 (PHQNDSVQGPSST).

Its subcellular location is the nucleus. Transcription factor that governs genes involved in reductive and siderophore-mediated iron acquisition, and carbon metabolism. Suppresses the expression of sreA and induces hapX to stimulate expression of genes involved in both reductive iron assimilation and siderophore-mediated iron uptake which is essential for the maximal virulence. Also regulates genes involved in gluconeogenesis. The sequence is that of Zinc cluster transcription factor acuM from Aspergillus fumigatus (strain ATCC MYA-4609 / CBS 101355 / FGSC A1100 / Af293) (Neosartorya fumigata).